A 469-amino-acid polypeptide reads, in one-letter code: Protopanaxadiol 6-hydroxylase (469 aa).

The chain crosses the membrane as a helical span at residues 3 to 23 (LFISSQLLLLLVFCLFLFWNF). Cysteine 416 is a heme binding site.

The protein belongs to the cytochrome P450 family. Requires heme as cofactor. Accumulates ubiquitously in all organs of plants, including roots, stems and leaves.

It localises to the membrane. The catalysed reaction is (20S)-protopanaxadiol + reduced [NADPH--hemoprotein reductase] + O2 = (20S)-protopanaxatriol + oxidized [NADPH--hemoprotein reductase] + H2O + H(+). It participates in secondary metabolite biosynthesis; terpenoid biosynthesis. Its activity is regulated as follows. Activated by N,N'-dicyclohexylcarbodiimide (DCCD) thus leading to increased ginsenosides accumulation. Its function is as follows. Component of the dammarane-type triterpene saponins (e.g. PPT-type ginsenosides or panaxosides) biosynthetic pathway. Catalyzes the formation of protopanaxatriol from protopanaxadiol during ginsenoside biosynthesis, a class of tetracyclic triterpenoid saponins. The polypeptide is Protopanaxadiol 6-hydroxylase (Panax ginseng (Korean ginseng)).